The primary structure comprises 312 residues: MGKRKPIPSINIGNNLNKKLKFSKQDSDQQQQQQQEQQPQQPQQPIIKYKSKREKEIHEKIDKIKSERKFIYKNAERHVKLSLEYAGLALSLPAVLKDLHRALEKFDALESSLIAELESLKIPVKNASTIPVLHPPINHVNTSIATTAAASINNNNNNDNTITTTTTTTTISNDNLASTTNSLPVNSVPRTTATLSDVNSLITATLGPTTAPTIGSSATTGDTTAIDGTNTNVTTDTTTIETTMKKKGRPPLFKEIPENCYVCGVTETPYWRRGTDEGVMVDLCNACGLRYMKLEKKERLLKQKNSTSNVLN.

Disordered regions lie at residues 1-45 and 213-232; these read MGKR…PQQP and TIGS…TNTN. Low complexity predominate over residues 29–45; it reads QQQQQQQEQQPQQPQQP. Residues 260-287 form a GATA-type zinc finger; sequence CYVCGVTETPYWRRGTDEGVMVDLCNAC.

In Dictyostelium discoideum (Social amoeba), this protein is GATA zinc finger domain-containing protein 20 (gtaT).